The primary structure comprises 233 residues: uncharacterized protein (233 aa).

Belongs to the LutC/YkgG family.

This is an uncharacterized protein from Neisseria meningitidis serogroup B (strain ATCC BAA-335 / MC58).